Consider the following 1323-residue polypeptide: Nck-associated protein 5-like (1323 aa).

Disordered stretches follow at residues 1-22 (MDQP…DSME), 113-142 (QIPL…TSLP), 156-175 (QQLR…ALDA), 204-238 (PATP…PWAP), 260-314 (PGEE…DTLL), and 341-714 (GATG…EQPE). Positions 1-135 (MDQPAGGTGK…PTSPAPNVSE (135 aa)) are mediates interaction with CDK5RAP2 and is required for homodimerization and microtubule bundle formation. Residues 22–109 (ELSTCQELLH…LQQKLQLTAN (88 aa)) adopt a coiled-coil conformation. 2 stretches are compositionally biased toward pro residues: residues 162–172 (GPGPPATPPPA) and 226–236 (CGPPQPEPSPW). The segment covering 271–298 (ASSRAPPSAQGPSSGPHCAPGSSSSSSS) has biased composition (low complexity). A compositionally biased stretch (pro residues) spans 353–364 (PGKPNSPDPGPP). A phosphoserine; by CDK1 mark is found at S436, S447, S466, and S473. Residues 480–483 (SRIP) carry the (S/T)X(I/L)P motif 1 motif. 3 positions are modified to phosphoserine: S489, S492, and S494. A compositionally biased stretch (polar residues) spans 531–542 (LRPSQSTVSTAL). S573 bears the Phosphoserine; by CDK1 mark. The segment covering 647–660 (RPGDPSHTPLRDRL) has biased composition (basic and acidic residues). Phosphothreonine is present on T654. Residues 743-1136 (RVYSSHSMGA…SGTPSKNLPK (394 aa)) form a mediates interaction with beta-tubulin and is required for microtubule bundle formation region. Phosphoserine; by CDK1 is present on S760. 4 disordered regions span residues 778-875 (ALCP…HSAI), 892-948 (GQER…EVKT), 979-1003 (AYLS…GQAQ), and 1027-1323 (KELP…GSQG). Residues 799–817 (KPKSPHSSPTKLPSKSPTK) are compositionally biased toward low complexity. The (S/T)X(I/L)P motif 2 motif lies at 808–811 (TKLP). The (S/T)X(I/L)P motif 3; required for interaction with MAPRE1 signature appears at 918–921 (SKLP). Residues 925–934 (RRTEATKNKD) show a composition bias toward basic and acidic residues. Residues 942-985 (LRKEVKTEARKLEAESLNISKLMAKAEDLRRALEEEKAYLSRAR) are a coiled coil. Residues 1027–1041 (KELPPKSWREPKPEY) are compositionally biased toward basic and acidic residues. Polar residues-rich tracts occupy residues 1097-1112 (VSTT…TRTL) and 1124-1136 (HSSS…NLPK). Pro residues predominate over residues 1143-1153 (DPPPGAPPARP). Residue S1184 is modified to Phosphoserine. 2 stretches are compositionally biased toward polar residues: residues 1225 to 1237 (TFPN…SSSD) and 1264 to 1273 (VDPSRTSTPQ). Residues 1302–1323 (LETSESLSDSLYDSLSSCGSQG) show a composition bias toward low complexity.

In terms of assembly, homodimer. Interacts with CDK5RAP2. Interacts with MAPRE1. Interacts with beta-tubulin. In terms of processing, CDK1/Cyclin B-dependent phosphorylation mediates its dissociation from centrosomes during mitosis.

The protein resides in the cytoplasm. Its subcellular location is the cytoskeleton. It is found in the microtubule organizing center. It localises to the centrosome. In terms of biological role, regulates microtubule organization and stabilization. Promotes microtubule growth and bundling formation and stabilizes microtubules by increasing intense acetylation of microtubules. Both tubulin-binding and homodimer formation are required for NCKAP5L-mediated microtubule bundle formation. The polypeptide is Nck-associated protein 5-like (Nckap5l) (Mus musculus (Mouse)).